The sequence spans 763 residues: Phosphoglycerol transferase I (763 aa).

4 consecutive transmembrane segments (helical) span residues 1 to 21 (MSEL…AWKA), 26 to 46 (WWFA…ITLF), 77 to 97 (ILPG…LGWI), and 108 to 128 (FGYS…SPAF).

Belongs to the OpgB family.

It is found in the cell inner membrane. The catalysed reaction is a phosphatidylglycerol + a membrane-derived-oligosaccharide D-glucose = a 1,2-diacyl-sn-glycerol + a membrane-derived-oligosaccharide 6-(glycerophospho)-D-glucose.. The protein operates within glycan metabolism; osmoregulated periplasmic glucan (OPG) biosynthesis. Its function is as follows. Transfers a phosphoglycerol residue from phosphatidylglycerol to the membrane-bound nascent glucan backbones. This chain is Phosphoglycerol transferase I, found in Escherichia coli (strain SE11).